A 379-amino-acid chain; its full sequence is RNA-splicing ligase RtcB2 (379 aa).

Residues Asp-74, Cys-77, His-137, His-168, and His-239 each coordinate Mn(2+). 136 to 140 (NHFVE) contributes to the GMP binding site. GMP is bound by residues 239–240 (HN), Ser-277, 294–297 (HGAG), and Lys-372. The active-site GMP-histidine intermediate is the His-294.

This sequence belongs to the RtcB family. RtcB2 subfamily. The cofactor is Mn(2+).

The catalysed reaction is a 3'-end 3'-phospho-ribonucleotide-RNA + a 5'-end dephospho-ribonucleoside-RNA + GTP = a ribonucleotidyl-ribonucleotide-RNA + GMP + diphosphate. Functionally, GTP-dependent RNA ligase involved in rRNA repair. Repairs damaged 16S rRNA in 30S subunits that has been cleaved between adenine-1493 and guanosine-1494 (E.coli nubering). This specific cleavage is inflicted by CdiA (ECL_04451) or by colicin E3-type (ColE3) proteins. Poorly repairs damaged rRNA in the 70S ribosome; addition of release factor PrfH improves repair about 3-fold in vitro, probably because PrfH hydrolyzes the nascent chain allowing ribosomal subunit dissociation. In vivo the PrfH-RtcB2 pair restores growth in the presence of ribotoxins that specifically create this damage. Does not repair damaged tRNA (tested with tRNA(Asp) and tRNA(Arg)). This Escherichia coli (strain ATCC 25922 / DSM 1103 / LMG 8223 / NCIMB 12210 / NCTC 12241 / WDCM 00013 / Seattle 1946) protein is RNA-splicing ligase RtcB2.